The sequence spans 298 residues: S-adenosylmethionine-dependent nucleotide dehydratase (298 aa).

Residues 8–235 enclose the Radical SAM core domain; the sequence is ANKELVVNWH…QRFGEIIYAE (228 aa). Residues C22, C26, and C29 each coordinate [4Fe-4S] cluster.

The protein belongs to the radical SAM superfamily. Viperin family. [4Fe-4S] cluster serves as cofactor.

It carries out the reaction CTP + AH2 + S-adenosyl-L-methionine = 3'-deoxy-3',4'-didehydro-CTP + 5'-deoxyadenosine + L-methionine + A + H2O + H(+). The catalysed reaction is UTP + AH2 + S-adenosyl-L-methionine = 3'-deoxy-3',4'-didehydro-UTP + 5'-deoxyadenosine + L-methionine + A + H2O + H(+). Functionally, expression of pVip8 in E.coli (strain MG1655) confers resistance to phages lambda, P1, SECphi8 and T7. Prevents culture collapse upon infection with T7. Catalyzes the conversion of cytidine triphosphate (CTP) to 3'-deoxy-3',4'-didehydro-CTP (ddhCTP) and uridine triphosphate (UTP) to 3'-deoxy-3',4'-didehydro-UTP (ddhUTP), probably via a SAM-dependent radical mechanism. The modified nucleotides repress transcription from T7 RNA polymerase-directed genes (possibly by acting as chain terminators), strongly suggesting these nucleotides block viral polymerase transcription. The polypeptide is S-adenosylmethionine-dependent nucleotide dehydratase (Psychrobacter lutiphocae (strain DSM 21542 / CCUG 56590 / IMMIB L-1110)).